Reading from the N-terminus, the 240-residue chain is Large ribosomal subunit protein uL2 (240 aa).

Residues 1-11 show a composition bias toward polar residues; that stretch reads MGKRLISQNRG. 2 disordered regions span residues 1–25 and 207–240; these read MGKRLISQNRGRGTPKYRSPTHKRK and GGRHQHIGKPSSVSRHTSPGRKVGHIASRRTGKR. 2 stretches are compositionally biased toward basic residues: residues 13-25 and 224-240; these read GTPKYRSPTHKRK and SPGRKVGHIASRRTGKR.

The protein belongs to the universal ribosomal protein uL2 family. In terms of assembly, part of the 50S ribosomal subunit. Forms a bridge to the 30S subunit in the 70S ribosome.

One of the primary rRNA binding proteins. Required for association of the 30S and 50S subunits to form the 70S ribosome, for tRNA binding and peptide bond formation. It has been suggested to have peptidyltransferase activity; this is somewhat controversial. Makes several contacts with the 16S rRNA in the 70S ribosome. In Methanococcus maripaludis (strain DSM 14266 / JCM 13030 / NBRC 101832 / S2 / LL), this protein is Large ribosomal subunit protein uL2.